Reading from the N-terminus, the 161-residue chain is Large-conductance mechanosensitive channel (161 aa).

2 helical membrane-spanning segments follow: residues 21 to 41 and 79 to 99; these read VGVI…DGVI and GAFI…FLLV. A compositionally biased stretch (low complexity) spans 142–154; it reads TAAPKAAAAPVAK. The disordered stretch occupies residues 142–161; it reads TAAPKAAAAPVAKPKTKPKA.

Belongs to the MscL family. As to quaternary structure, homopentamer.

It is found in the cell inner membrane. In terms of biological role, channel that opens in response to stretch forces in the membrane lipid bilayer. May participate in the regulation of osmotic pressure changes within the cell. The polypeptide is Large-conductance mechanosensitive channel (Caulobacter sp. (strain K31)).